The sequence spans 598 residues: Vanadium-dependent bromoperoxidase (598 aa).

Ca(2+) contacts are provided by Phe361, Gln363, Asp365, Asp368, and Gln370. Residues Lys400 and Arg408 each coordinate vanadate. Residue His480 is part of the active site. Vanadate is bound by residues Ser485, Gly486, His487, Arg547, and His553. His487 is a catalytic residue.

The protein belongs to the vanadium-dependent haloperoxidase family. In terms of assembly, homododecamer. The cofactor is Ca(2+). Vanadate is required as a cofactor.

The catalysed reaction is RH + Br(-) + H2O2 = RBr + 2 H2O.. Its function is as follows. Catalyzes the halogenation of organic substrates in the presence of hydrogen peroxide. The chain is Vanadium-dependent bromoperoxidase from Corallina pilulifera (Red coralline alga).